Consider the following 157-residue polypeptide: Endoribonuclease YbeY (157 aa).

H114, H118, and H124 together coordinate Zn(2+).

It belongs to the endoribonuclease YbeY family. Zn(2+) serves as cofactor.

The protein localises to the cytoplasm. In terms of biological role, single strand-specific metallo-endoribonuclease involved in late-stage 70S ribosome quality control and in maturation of the 3' terminus of the 16S rRNA. The sequence is that of Endoribonuclease YbeY from Salmonella agona (strain SL483).